Here is a 739-residue protein sequence, read N- to C-terminus: MPRSEADTIRILVSTDNHVGYAERHPVRKDDSWRTFDEIMQIAKKQDVDMVLLGGDLFHENKPSRKSMYQVMRSLRKHCLGMKPCELEFLSDAAEVFEGAFPFVNYEDPDINVAIPVFSIHGNHDDPSGDGHYCSLDLLQAAGLVNYFGRVPEADNIHVKPILLQKGRTKMALYGLSNVRDERMHRTFRDNKVRFYRPNQQKNDWFNLLALHQNHYAHTRTSYVAENMLPDFMDLVIWGHEHECLIDPVRNPETGFHVMQPGSSVATSLVPGEAVPKHVAILNITGRKFEVDKIPLKTVRPFVTREIVLASDKRFKGLDKQNNRHEITKRLMVIVNEMIEEANAEWRAVHAEDDDMDEDMEPPLPLVRLKVDYTAPDGARYEVENPHRFSNRFTGKVANHNDVVRFHCNTKGKKNVATAPGVREDIAEILESADTIKVDNLVQEFFAQQSLKILPQAPFSDAVNQFVSKDDKHAVEMFVIESLSTQVKELLQLDDDKIVDLDAHIQDFRQVMEKSFDAGQHKQAQRTKRFKRKPDGWDSDLDGHWINQPQALEDIPAEVEPKGNDRPTKRVPTSGVTFSDEDEDMDMDNQPVPIRAAPKRGAAAKTTAAAKKAAPGKKAAPAKKAAPAKKAAPAKKAPARGRKKKTPFVDSDEEEEEDYPEDDDEEEEEADEEEEDVIMEDDEEDPPAPPPKPKATSRVASTRASARATPVRATPARATQARLRLRRPPKPGLLARRLG.

Residues D16, H18, D56, and N123 each contribute to the Mn(2+) site. H124 serves as the catalytic Proton donor. 3 residues coordinate Mn(2+): H212, H240, and H242. The interval 516–739 is disordered; it reads FDAGQHKQAQ…KPGLLARRLG (224 aa). Positions 523–532 are enriched in basic residues; sequence QAQRTKRFKR. Positions 559–568 are enriched in basic and acidic residues; sequence VEPKGNDRPT. Positions 599 to 636 are enriched in low complexity; it reads KRGAAAKTTAAAKKAAPGKKAAPAKKAAPAKKAAPAKK. A compositionally biased stretch (basic residues) spans 637–646; it reads APARGRKKKT. Residues 650-686 are compositionally biased toward acidic residues; sequence DSDEEEEEDYPEDDDEEEEEADEEEEDVIMEDDEEDP. The span at 694–722 shows a compositional bias: low complexity; that stretch reads KATSRVASTRASARATPVRATPARATQAR.

Belongs to the MRE11/RAD32 family. Component of the MRN complex composed of two heterodimers RAD50 and MRE11 associated with a single NBS1. It depends on Mn(2+) as a cofactor.

It is found in the nucleus. Its subcellular location is the chromosome. The protein localises to the telomere. In terms of biological role, core component of the MRN complex, which plays a central role in double-strand break (DSB) repair, DNA recombination, maintenance of telomere integrity and meiosis. The MRN complex is involved in the repair of DNA double-strand breaks (DSBs) via homologous recombination (HR), an error-free mechanism which primarily occurs during S and G2 phases. The complex (1) mediates the end resection of damaged DNA, which generates proper single-stranded DNA, a key initial steps in HR, and is (2) required for the recruitment of other repair factors and efficient activation of ATM and ATR upon DNA damage. Within the MRN complex, MRE11 possesses both single-strand endonuclease activity and double-strand-specific 3'-5' exonuclease activity. MRE11 first endonucleolytically cleaves the 5' strand at DNA DSB ends to prevent non-homologous end joining (NHEJ) and licence HR. It then generates a single-stranded DNA gap via 3' to 5' exonucleolytic degradation, which is required for single-strand invasion and recombination. The MRN complex is also required for the processing of R-loops. The polypeptide is Double-strand break repair protein mus-23 (mus-23) (Neurospora crassa (strain ATCC 24698 / 74-OR23-1A / CBS 708.71 / DSM 1257 / FGSC 987)).